Here is a 309-residue protein sequence, read N- to C-terminus: Aspartate carbamoyltransferase catalytic subunit (309 aa).

Carbamoyl phosphate is bound by residues Arg55 and Thr56. Residue Lys85 participates in L-aspartate binding. Positions 106, 135, and 138 each coordinate carbamoyl phosphate. L-aspartate is bound by residues Arg168 and Arg230. The carbamoyl phosphate site is built by Leu268 and Pro269.

Belongs to the aspartate/ornithine carbamoyltransferase superfamily. ATCase family. As to quaternary structure, heterododecamer (2C3:3R2) of six catalytic PyrB chains organized as two trimers (C3), and six regulatory PyrI chains organized as three dimers (R2).

It carries out the reaction carbamoyl phosphate + L-aspartate = N-carbamoyl-L-aspartate + phosphate + H(+). The protein operates within pyrimidine metabolism; UMP biosynthesis via de novo pathway; (S)-dihydroorotate from bicarbonate: step 2/3. Its function is as follows. Catalyzes the condensation of carbamoyl phosphate and aspartate to form carbamoyl aspartate and inorganic phosphate, the committed step in the de novo pyrimidine nucleotide biosynthesis pathway. The sequence is that of Aspartate carbamoyltransferase catalytic subunit from Photobacterium profundum (strain SS9).